Reading from the N-terminus, the 590-residue chain is Acetolactate synthase large subunit (590 aa).

E61 contacts thiamine diphosphate. FAD contacts are provided by residues R163, 271-292 (HGTAYANFAVSECDLLIALGAR), and 314-333 (DIDPAEVGKNRIPQVAIVGD). The interval 405-484 (QHQMWSAQFL…IKIVIINNRW (80 aa)) is thiamine pyrophosphate binding. The Mg(2+) site is built by D455 and N482.

This sequence belongs to the TPP enzyme family. Dimer of large and small chains. Mg(2+) is required as a cofactor. It depends on thiamine diphosphate as a cofactor.

The protein resides in the plastid. Its subcellular location is the chloroplast. The catalysed reaction is 2 pyruvate + H(+) = (2S)-2-acetolactate + CO2. It participates in amino-acid biosynthesis; L-isoleucine biosynthesis; L-isoleucine from 2-oxobutanoate: step 1/4. It functions in the pathway amino-acid biosynthesis; L-valine biosynthesis; L-valine from pyruvate: step 1/4. The chain is Acetolactate synthase large subunit (ilvB) from Porphyra purpurea (Red seaweed).